The sequence spans 352 residues: Septin-2B (352 aa).

One can recognise a Septin-type G domain in the interval lysine 33 to lysine 305. The tract at residues glycine 43–serine 50 is G1 motif. GTP is bound by residues glycine 43–serine 50, threonine 77, glycine 103, lysine 182–glutamate 190, glycine 240, and arginine 255. Residues aspartate 100–glycine 103 are G3 motif. The segment at alanine 181–aspartate 184 is G4 motif. Positions tryptophan 259–histidine 269 are important for dimerization.

The protein belongs to the TRAFAC class TrmE-Era-EngA-EngB-Septin-like GTPase superfamily. Septin GTPase family. As to quaternary structure, septins polymerize into heterooligomeric protein complexes that form filaments, and associate with cellular membranes, actin filaments and microtubules. GTPase activity is required for filament formation. Can form heterooligomers with other family members and form filaments. Interacts with wdpcp.

It localises to the cytoplasm. Its subcellular location is the cytoskeleton. The protein localises to the spindle. The protein resides in the cleavage furrow. It is found in the midbody. It localises to the cell projection. Its subcellular location is the cilium membrane. In terms of biological role, filament-forming cytoskeletal GTPase. Required for normal organization of the actin cytoskeleton. Plays a role in the biogenesis of polarized columnar-shaped epithelium. Required for the progression through mitosis through regulation of chromosome congression. During anaphase, may be required for chromosome segregation and spindle elongation. Probably plays a role in ciliogenesis and collective cell movements including convergent extension during gastrulation. In cilia, required for the integrity of the diffusion barrier at the base of the primary cilium that prevents diffusion of transmembrane proteins between the cilia and plasma membranes. Controls cell shape and not polarization of cells during convergent extension. The sequence is that of Septin-2B (sept2-b) from Xenopus laevis (African clawed frog).